The sequence spans 352 residues: Thymidine kinase (352 aa).

26–33 provides a ligand contact to ATP; it reads GSMGIGKT. The Proton acceptor role is filled by E54. Q95 is a substrate binding site. Position 185 (R185) interacts with ATP. Residue R191 participates in substrate binding.

Belongs to the herpesviridae thymidine kinase family. As to quaternary structure, homodimer.

It carries out the reaction thymidine + ATP = dTMP + ADP + H(+). Its function is as follows. Catalyzes the transfer of the gamma-phospho group of ATP to thymidine to generate dTMP in the salvage pathway of pyrimidine synthesis. The dTMP serves as a substrate for DNA polymerase during viral DNA replication. Allows the virus to be reactivated and to grow in non-proliferative cells lacking a high concentration of phosphorylated nucleic acid precursors. This is Thymidine kinase from Gallid herpesvirus 2 (strain Chicken/Md5/ATCC VR-987) (GaHV-2).